The chain runs to 113 residues: UPF0102 protein Ccon26_01140 (113 aa).

Belongs to the UPF0102 family.

This Campylobacter concisus (strain 13826) protein is UPF0102 protein Ccon26_01140.